Reading from the N-terminus, the 714-residue chain is Angiogenic factor with G patch and FHA domains 1 (714 aa).

Positions 1 to 18 are enriched in pro residues; it reads MASEAPSPPRSPPPPTSP. 3 disordered regions span residues 1 to 22, 259 to 307, and 322 to 384; these read MASEAPSPPRSPPPPTSPEPEL, QPYP…HTSC, and IGIH…SYDE. A2 carries the N-acetylalanine modification. Phosphoserine is present on residues S7 and S11. Residues 18–88 adopt a coiled-coil conformation; the sequence is PEPELAQLRR…QRGRNEDNKK (71 aa). Positions 279–298 are enriched in basic and acidic residues; sequence KDPDSSATNEEKDLNSEDQK. The span at 335–355 shows a compositional bias: polar residues; sequence VPTSGNTIESPLHENISNSTS. A Phosphoserine modification is found at S344. Residues 364–383 are compositionally biased toward acidic residues; it reads TDSEPEEGEITDSQTEDSYD. The region spanning 434–487 is the FHA domain; that stretch reads ATIGREKDMEHTLRIPEVGVSKFHAEIYFDHDLQSYVLVDQGSQNGTIVNGKQI. Residues 586–609 show a composition bias toward basic and acidic residues; that stretch reads KYKDRAGKRREQVGSEGTFQRDDA. Disordered stretches follow at residues 586–617 and 655–714; these read KYKDRAGKRREQVGSEGTFQRDDAPASVHSEI and RTHA…GTLE. The G-patch domain occupies 619–665; it reads DSNKGRKMLEKMGWKKGEGLGKDGGGMKTPIQLQLRRTHAGLGTGKP. At K664 the chain carries N6-acetyllysine. The span at 680–690 shows a compositional bias: basic and acidic residues; that stretch reads KNWDKARERFT.

In terms of assembly, interacts with the secreted angiogenic factor TNFSF12. Widely expressed. Expressed in endothelial cells, vascular smooth muscle cells and osteoblasts. Expressed in umbilical vein endothelial cells and microvascular endothelial cells.

It localises to the cytoplasm. Its subcellular location is the secreted. Promotes angiogenesis and the proliferation of endothelial cells. Able to bind to endothelial cells and promote cell proliferation, suggesting that it may act in an autocrine fashion. The polypeptide is Angiogenic factor with G patch and FHA domains 1 (AGGF1) (Homo sapiens (Human)).